Reading from the N-terminus, the 523-residue chain is Nondiscriminating glutamyl-tRNA synthetase EARS2, mitochondrial (523 aa).

Residues 1 to 41 (MAALLRRLLQRERPSAASGRPVGRREANLGTDAGVAVRVRF) constitute a mitochondrion transit peptide. An L-glutamate-binding site is contributed by 40-42 (RFA). The short motif at 45–53 (PTGFLHLGG) is the 'HIGH' region element. Position 50 (H50) interacts with ATP. Residues E76, 228–232 (YHLAC), and R246 contribute to the L-glutamate site. Residue E249 participates in ATP binding. K256 carries the post-translational modification N6-succinyllysine. 284–288 (KLSKR) contacts ATP. The 'KMSKS' region motif lies at 284-288 (KLSKR). K486 is modified (N6-acetyllysine).

Belongs to the class-I aminoacyl-tRNA synthetase family. Glutamate--tRNA ligase type 1 subfamily.

It is found in the mitochondrion matrix. The catalysed reaction is tRNA(Glx) + L-glutamate + ATP = L-glutamyl-tRNA(Glx) + AMP + diphosphate. The enzyme catalyses tRNA(Glu) + L-glutamate + ATP = L-glutamyl-tRNA(Glu) + AMP + diphosphate. It carries out the reaction tRNA(Gln) + L-glutamate + ATP = L-glutamyl-tRNA(Gln) + AMP + diphosphate. Non-discriminating glutamyl-tRNA synthetase that catalyzes aminoacylation of both mitochondrial tRNA(Glu) and tRNA(Gln) and participates in RNA aminoacylation for mitochondrial protein translation. Attachs glutamate to tRNA(Glu) or tRNA(Gln) in a two-step reaction: glutamate is first activated by ATP to form Glu-AMP and then transferred to the acceptor end of tRNA(Glu) or tRNA(Gln). In vitro, cytoplasmic tRNA(Gln) is slightly glutamylated, but with low activity. In Homo sapiens (Human), this protein is Nondiscriminating glutamyl-tRNA synthetase EARS2, mitochondrial.